The primary structure comprises 547 residues: Flagellar hook-associated protein 1 (547 aa).

The protein belongs to the flagella basal body rod proteins family.

The protein localises to the secreted. The protein resides in the bacterial flagellum. The chain is Flagellar hook-associated protein 1 (flgK) from Escherichia coli (strain K12).